Consider the following 126-residue polypeptide: Penton protein P31 (126 aa).

The protein resides in the virion. Its function is as follows. In association with P2 and trimeric P5, forms the spike complexes located at the 5-fold vertices of the capsid. Essential for viral infectivity. The sequence is that of Penton protein P31 (XXXI) from Acinetobacter calcoaceticus (Arthrobacter siderocapsulatus).